A 709-amino-acid chain; its full sequence is Polyribonucleotide nucleotidyltransferase (709 aa).

Residues D490 and D496 each contribute to the Mg(2+) site. In terms of domain architecture, KH spans 557-616; sequence PKVITMRVLPEKIPVIIGPSGKNIKKIIDETGVKIDLDQEGLVRIYAVDGESADKAKEMI. The S1 motif domain maps to 626 to 694; sequence GEVYMGKVTR…EMGRAKVSLK (69 aa).

The protein belongs to the polyribonucleotide nucleotidyltransferase family. Requires Mg(2+) as cofactor.

The protein localises to the cytoplasm. It carries out the reaction RNA(n+1) + phosphate = RNA(n) + a ribonucleoside 5'-diphosphate. Its function is as follows. Involved in mRNA degradation. Catalyzes the phosphorolysis of single-stranded polyribonucleotides processively in the 3'- to 5'-direction. The chain is Polyribonucleotide nucleotidyltransferase from Persephonella marina (strain DSM 14350 / EX-H1).